Here is a 349-residue protein sequence, read N- to C-terminus: Alpha-centractin (349 aa).

Met-1 carries the N-acetylmethionine modification.

The protein belongs to the actin family. ARP1 subfamily. In terms of assembly, part of the ACTR1A/ACTB filament around which the dynactin complex is built. The filament contains 8 copies of ACTR1A and 1 ACTB. Interacts with dynein and adapters such as BICD2. Interacts with BCCIP (isoform 2/alpha).

The protein localises to the cytoplasm. It is found in the cytoskeleton. The protein resides in the microtubule organizing center. It localises to the centrosome. Its subcellular location is the cell cortex. Functionally, part of the ACTR1A/ACTB filament around which the dynactin complex is built. The dynactin multiprotein complex activates the molecular motor dynein for ultra-processive transport along microtubules. In Sus scrofa (Pig), this protein is Alpha-centractin (ACTR1A).